Here is a 196-residue protein sequence, read N- to C-terminus: Peptidyl-tRNA hydrolase (196 aa).

Position 21 (Tyr-21) interacts with tRNA. The Proton acceptor role is filled by His-26. Residues Phe-72, Asn-74, and Asn-120 each coordinate tRNA.

The protein belongs to the PTH family. Monomer.

It localises to the cytoplasm. The catalysed reaction is an N-acyl-L-alpha-aminoacyl-tRNA + H2O = an N-acyl-L-amino acid + a tRNA + H(+). Functionally, hydrolyzes ribosome-free peptidyl-tRNAs (with 1 or more amino acids incorporated), which drop off the ribosome during protein synthesis, or as a result of ribosome stalling. Catalyzes the release of premature peptidyl moieties from peptidyl-tRNA molecules trapped in stalled 50S ribosomal subunits, and thus maintains levels of free tRNAs and 50S ribosomes. The chain is Peptidyl-tRNA hydrolase from Mycobacteroides abscessus (strain ATCC 19977 / DSM 44196 / CCUG 20993 / CIP 104536 / JCM 13569 / NCTC 13031 / TMC 1543 / L948) (Mycobacterium abscessus).